The sequence spans 229 residues: Probable septum site-determining protein MinC (229 aa).

It belongs to the MinC family. Interacts with MinD and FtsZ.

Functionally, cell division inhibitor that blocks the formation of polar Z ring septums. Rapidly oscillates between the poles of the cell to destabilize FtsZ filaments that have formed before they mature into polar Z rings. Prevents FtsZ polymerization. The sequence is that of Probable septum site-determining protein MinC from Ruminiclostridium cellulolyticum (strain ATCC 35319 / DSM 5812 / JCM 6584 / H10) (Clostridium cellulolyticum).